Consider the following 361-residue polypeptide: T-box-containing protein TBX6L (361 aa).

A DNA-binding region (T-box) is located at residues 36–209; that stretch reads LWMKFHQIGT…NNPFAKGFRE (174 aa). 2 disordered regions span residues 203–259 and 280–323; these read FAKG…VKEE and HAFP…QLPS. Basic and acidic residues-rich tracts occupy residues 206–220 and 234–259; these read GFREHGKNTRREGRA and KLPEEKESGAEERDFEKDENVDVKEE. The segment covering 280-290 has biased composition (low complexity); it reads HAFPAASPAPA.

The protein localises to the nucleus. Its function is as follows. May be involved in regulating somitogenesis. The chain is T-box-containing protein TBX6L (TBX6L) from Gallus gallus (Chicken).